A 490-amino-acid chain; its full sequence is NADP-reducing hydrogenase subunit HndC (490 aa).

4Fe-4S ferredoxin-type domains are found at residues 433–462 (LTYT…GTKK) and 463–490 (QPHT…IIKQ).

The protein belongs to the complex I 51 kDa subunit family. As to quaternary structure, heterotetramer composed of HndA, HndB, HndC and HndD subunits. HndC is probably the reducing subunit.

It catalyses the reaction H2 + NADP(+) = NADPH + H(+). With respect to regulation, inhibited by oxygen. Functionally, catalyzes the reduction of NADP in the presence of molecular H2 to yield NADPH. In Solidesulfovibrio fructosivorans (Desulfovibrio fructosivorans), this protein is NADP-reducing hydrogenase subunit HndC (hndC).